A 79-amino-acid chain; its full sequence is ATP synthase subunit beta (79 aa).

This sequence belongs to the ATPase alpha/beta chains family. In terms of assembly, F-type ATPases have 2 components, CF(1) - the catalytic core - and CF(0) - the membrane proton channel. CF(1) has five subunits: alpha(3), beta(3), gamma(1), delta(1), epsilon(1). CF(0) has three main subunits: a(1), b(2) and c(9-12). The alpha and beta chains form an alternating ring which encloses part of the gamma chain. CF(1) is attached to CF(0) by a central stalk formed by the gamma and epsilon chains, while a peripheral stalk is formed by the delta and b chains.

It is found in the cell membrane. The catalysed reaction is ATP + H2O + 4 H(+)(in) = ADP + phosphate + 5 H(+)(out). Functionally, produces ATP from ADP in the presence of a proton gradient across the membrane. The catalytic sites are hosted primarily by the beta subunits. The chain is ATP synthase subunit beta (atpD) from Streptococcus downei (Streptococcus sobrinus).